We begin with the raw amino-acid sequence, 268 residues long: MNNINDSSAIHITPETFVKQIRSLGRYNFPEPALVDPDGIGIVGIGGNLAPETLISAYAQGLFPWFNDDEPIAWWCPEPRCVMQPTDYQPSKSLRKQANNARWQLTLNQAFNEVIHACSLPRSNGLPEGEHTWIHDDMIEAYNELHAQGFAHSVEVWDDQGQLVGGLYGLKIGSIYFGESMFHIASNASKLAFWGLMRLCTQSNVTLVDCQLPNEHLMSLGAITLSRTEFLTQLDTLISNGSDAWHKNSHRPLAVSLLGNLQPWQLNP.

Belongs to the L/F-transferase family.

The protein resides in the cytoplasm. It catalyses the reaction N-terminal L-lysyl-[protein] + L-leucyl-tRNA(Leu) = N-terminal L-leucyl-L-lysyl-[protein] + tRNA(Leu) + H(+). The catalysed reaction is N-terminal L-arginyl-[protein] + L-leucyl-tRNA(Leu) = N-terminal L-leucyl-L-arginyl-[protein] + tRNA(Leu) + H(+). It carries out the reaction L-phenylalanyl-tRNA(Phe) + an N-terminal L-alpha-aminoacyl-[protein] = an N-terminal L-phenylalanyl-L-alpha-aminoacyl-[protein] + tRNA(Phe). Functionally, functions in the N-end rule pathway of protein degradation where it conjugates Leu, Phe and, less efficiently, Met from aminoacyl-tRNAs to the N-termini of proteins containing an N-terminal arginine or lysine. The polypeptide is Leucyl/phenylalanyl-tRNA--protein transferase (Psychrobacter arcticus (strain DSM 17307 / VKM B-2377 / 273-4)).